Reading from the N-terminus, the 533-residue chain is 2-isopropylmalate synthase (533 aa).

In terms of domain architecture, Pyruvate carboxyltransferase spans 8–270 (VIIFDTTLRD…YFNPFLGRPA (263 aa)). Mn(2+) contacts are provided by aspartate 17, histidine 209, histidine 211, and asparagine 245. The tract at residues 409 to 533 (RLELVQVSCG…KEKTPEMLQV (125 aa)) is regulatory domain.

The protein belongs to the alpha-IPM synthase/homocitrate synthase family. LeuA type 1 subfamily. In terms of assembly, homodimer. Mn(2+) is required as a cofactor.

The protein localises to the cytoplasm. The enzyme catalyses 3-methyl-2-oxobutanoate + acetyl-CoA + H2O = (2S)-2-isopropylmalate + CoA + H(+). It participates in amino-acid biosynthesis; L-leucine biosynthesis; L-leucine from 3-methyl-2-oxobutanoate: step 1/4. Its function is as follows. Catalyzes the condensation of the acetyl group of acetyl-CoA with 3-methyl-2-oxobutanoate (2-ketoisovalerate) to form 3-carboxy-3-hydroxy-4-methylpentanoate (2-isopropylmalate). This Microcystis aeruginosa protein is 2-isopropylmalate synthase.